A 64-amino-acid chain; its full sequence is Large ribosomal subunit protein bL35 (64 aa).

The segment at 19–44 is disordered; that stretch reads TGKLKASRPGRRHKLTGKTPKRKRQL. Positions 23-44 are enriched in basic residues; it reads KASRPGRRHKLTGKTPKRKRQL.

It belongs to the bacterial ribosomal protein bL35 family.

The chain is Large ribosomal subunit protein bL35 from Protochlamydia amoebophila (strain UWE25).